A 468-amino-acid chain; its full sequence is V-type proton ATPase subunit S1 (468 aa).

The signal sequence occupies residues 1–35 (MMAATAAAQVRAGTRWAPALCRMPWLPLMLVAAAA). Residues 36 to 228 (ATSEQQVPLV…TAVRPSRVAR (193 aa)) constitute a propeptide that is removed on maturation. Over 36 to 417 (ATSEQQVPLV…KKFSYASDCA (382 aa)) the chain is Lumenal. 8 N-linked (GlcNAc...) asparagine glycosylation sites follow: asparagine 167, asparagine 258, asparagine 271, asparagine 294, asparagine 301, asparagine 348, asparagine 355, and asparagine 404. A disulfide bridge links cysteine 369 with cysteine 416. The helical transmembrane segment at 418 to 438 (GFFSPGIWMGLLTSLFMLFIF) threads the bilayer. At 439–468 (TYGLHMILSLKTMDRFDDHKGPTITLTQIV) the chain is on the cytoplasmic side.

This sequence belongs to the vacuolar ATPase subunit S1 family. In terms of assembly, accessory component of the multisubunit proton-transporting vacuolar (V)-ATPase protein pump. Interacts (via N-terminus) with ATP6AP2 (via N-terminus). Interacts with RNASEK. Interacts with TMEM106B (via C-terminus). Post-translationally, N-glycosylated.

The protein resides in the endoplasmic reticulum membrane. Its subcellular location is the endoplasmic reticulum-Golgi intermediate compartment membrane. The protein localises to the cytoplasmic vesicle. It localises to the secretory vesicle. It is found in the synaptic vesicle membrane. The protein resides in the clathrin-coated vesicle membrane. Functionally, accessory subunit of the proton-transporting vacuolar (V)-ATPase protein pump, which is required for luminal acidification of secretory vesicles. Guides the V-type ATPase into specialized subcellular compartments, such as neuroendocrine regulated secretory vesicles or the ruffled border of the osteoclast, thereby regulating its activity. Involved in membrane trafficking and Ca(2+)-dependent membrane fusion. May play a role in the assembly of the V-type ATPase complex. In aerobic conditions, involved in intracellular iron homeostasis, thus triggering the activity of Fe(2+) prolyl hydroxylase (PHD) enzymes, and leading to HIF1A hydroxylation and subsequent proteasomal degradation. In islets of Langerhans cells, may regulate the acidification of dense-core secretory granules. The sequence is that of V-type proton ATPase subunit S1 (ATP6AP1) from Bos taurus (Bovine).